A 504-amino-acid polypeptide reads, in one-letter code: Ammonium transporter 1 member 4 (504 aa).

12 consecutive transmembrane segments (helical) span residues 12–32 (LIPL…AEYI), 55–75 (LLFS…LCAG), 90–110 (VIDA…FAFG), 136–156 (YFLY…GSIA), 161–181 (FVAY…IVSH), 207–227 (FAGS…GALI), 251–271 (LVVL…PGSF), 292–314 (AVGR…TLFG), 318–338 (IDGY…FAAI), 344–364 (VVEP…LMGC), 377–397 (LEAA…TGLF), and 430–450 (VVQI…LFFI). Thr-471 is modified (phosphothreonine).

It belongs to the ammonia transporter channel (TC 1.A.11.2) family. In terms of tissue distribution, specifically expressed in pollen grains and tubes.

The protein localises to the cell membrane. Its function is as follows. High affinity ammonium transporter in the plasma membrane. The protein is Ammonium transporter 1 member 4 (AMT1-4) of Arabidopsis thaliana (Mouse-ear cress).